The chain runs to 224 residues: uncharacterized protein (224 aa).

This is an uncharacterized protein from Methanocaldococcus jannaschii (strain ATCC 43067 / DSM 2661 / JAL-1 / JCM 10045 / NBRC 100440) (Methanococcus jannaschii).